Here is a 375-residue protein sequence, read N- to C-terminus: Probable peptidoglycan glycosyltransferase FtsW (375 aa).

The Cytoplasmic segment spans residues 1–16 (MNLNFKLNLKEIERYD). The chain crosses the membrane as a helical span at residues 17–37 (LVILLMAVALTCFGVVMVYSA). Over 38-49 (SSVMATKKFHDG) the chain is Periplasmic. The chain crosses the membrane as a helical span at residues 50 to 70 (FYFLKRQGIYAILGCAAMIVA). The Cytoplasmic portion of the chain corresponds to 71-81 (MRIDYRQWREY). The chain crosses the membrane as a helical span at residues 82–102 (AVPILLGCLLLLLLVFIPGIG). Over 103–145 (GAAKGASRWIRFPGFNLQPSELAKIALIMYMAYSLDKKQEKVK) the chain is Periplasmic. Residues 146 to 166 (FFSTGFAPYMVLLAILLAILL) traverse the membrane as a helical segment. Residues 167 to 169 (KQH) are Cytoplasmic-facing. A helical transmembrane segment spans residues 170-190 (DLGSALTMGGVAILMLFAAGT). Residues 191 to 193 (RPR) are Periplasmic-facing. Residues 194–214 (YILGMVVLTLPFLYFLVMNVD) traverse the membrane as a helical segment. The Cytoplasmic portion of the chain corresponds to 215–233 (YRRRRILAYLNPWEDPTNT). Residues 234–254 (GFQIIQSWLAFGNGGIIGQGL) form a helical membrane-spanning segment. Over 255–279 (GEGKQKMFFLPEAHTDFILSVVGEE) the chain is Periplasmic. The helical transmembrane segment at 280–300 (LGLIGVIVIAAMFLMLVLRGV) threads the bilayer. Residues 301–312 (RVALMAQDPFGR) lie on the Cytoplasmic side of the membrane. A helical transmembrane segment spans residues 313-333 (FLAFGIVTLLGIQAFVNMGVV). Residues 334 to 343 (TGLLPTKGLA) lie on the Periplasmic side of the membrane. The chain crosses the membrane as a helical span at residues 344–364 (LPFISYGGSSLIVTLFAVGIL). Residues 365–375 (LNVSTRMKGTP) lie on the Cytoplasmic side of the membrane.

It belongs to the SEDS family. FtsW subfamily.

It is found in the cell inner membrane. It catalyses the reaction [GlcNAc-(1-&gt;4)-Mur2Ac(oyl-L-Ala-gamma-D-Glu-L-Lys-D-Ala-D-Ala)](n)-di-trans,octa-cis-undecaprenyl diphosphate + beta-D-GlcNAc-(1-&gt;4)-Mur2Ac(oyl-L-Ala-gamma-D-Glu-L-Lys-D-Ala-D-Ala)-di-trans,octa-cis-undecaprenyl diphosphate = [GlcNAc-(1-&gt;4)-Mur2Ac(oyl-L-Ala-gamma-D-Glu-L-Lys-D-Ala-D-Ala)](n+1)-di-trans,octa-cis-undecaprenyl diphosphate + di-trans,octa-cis-undecaprenyl diphosphate + H(+). The protein operates within cell wall biogenesis; peptidoglycan biosynthesis. Its function is as follows. Peptidoglycan polymerase that is essential for cell division. The sequence is that of Probable peptidoglycan glycosyltransferase FtsW from Geobacter metallireducens (strain ATCC 53774 / DSM 7210 / GS-15).